The following is an 884-amino-acid chain: Translation initiation factor IF-2 (884 aa).

Residues 58-248 (PEKVEQKRVR…GKTESVETEE (191 aa)) are disordered. Basic residues predominate over residues 66–77 (VRSNVIRKRRQP). Positions 87–106 (EAPAAQAPEAEEVTAPTAEE) are enriched in low complexity. Residues 172–183 (SRKKAKAKKHQA) show a composition bias toward basic residues. Low complexity predominate over residues 207-223 (DTAPADSPAAPAAATPA). A compositionally biased stretch (basic residues) spans 229–239 (KPSRKDRKKRG). The region spanning 384–553 (KRAPVVTIMG…LLQAEMLELK (170 aa)) is the tr-type G domain. The segment at 393-400 (GHVDHGKT) is G1. GTP is bound at residue 393-400 (GHVDHGKT). The G2 stretch occupies residues 418–422 (GITQH). The segment at 439-442 (DTPG) is G3. GTP-binding positions include 439–443 (DTPGH) and 493–496 (NKID). Positions 493–496 (NKID) are G4. The segment at 529-531 (SAK) is G5.

The protein belongs to the TRAFAC class translation factor GTPase superfamily. Classic translation factor GTPase family. IF-2 subfamily.

The protein resides in the cytoplasm. One of the essential components for the initiation of protein synthesis. Protects formylmethionyl-tRNA from spontaneous hydrolysis and promotes its binding to the 30S ribosomal subunits. Also involved in the hydrolysis of GTP during the formation of the 70S ribosomal complex. This is Translation initiation factor IF-2 from Desulfosudis oleivorans (strain DSM 6200 / JCM 39069 / Hxd3) (Desulfococcus oleovorans).